Reading from the N-terminus, the 357-residue chain is UPF0283 membrane protein BMEI0952 (357 aa).

Residues 1 to 36 (MSDKTPRKPTAFRLEQPARVSAASEQEEPRRPRAVK) are disordered. Residues 27–36 (EEPRRPRAVK) are compositionally biased toward basic and acidic residues. The next 2 membrane-spanning stretches (helical) occupy residues 78-98 (ILFGALGILVSFAIGIWTEDL) and 109-129 (LGWTALGVAMVALAAFAAIIL).

This sequence belongs to the UPF0283 family.

Its subcellular location is the cell inner membrane. The polypeptide is UPF0283 membrane protein BMEI0952 (Brucella melitensis biotype 1 (strain ATCC 23456 / CCUG 17765 / NCTC 10094 / 16M)).